A 382-amino-acid chain; its full sequence is Regulatory protein RapC (382 aa).

5 TPR repeats span residues 102-138 (YYVN…VADH), 149-182 (AEAY…NVRI), 183-216 (IQCH…AQAE), 223-256 (GRAY…FESS), and 263-296 (PQAY…AKET).

It belongs to the Rap family. In terms of assembly, homodimer. Interacts specifically with the C-terminal DNA-binding domain of ComA. Interacts with CSF.

It is found in the cytoplasm. With respect to regulation, inhibited by the competence and sporulation stimulating factor (CSF), encoded by phrC, which prevents RapC-ComA interaction. In terms of biological role, involved in the regulation of genetic competence development. Inhibits the activity of ComA, a transcriptional factor that regulates the development of genetic competence. Acts by binding to ComA, independently of its phosphorylation state, leading to the inhibition of ComA DNA-binding activity. Does not dephosphorylate phospho-ComA and does not affect the phosphorylation level of the ComP-ComA system. The polypeptide is Regulatory protein RapC (rapC) (Bacillus subtilis (strain 168)).